We begin with the raw amino-acid sequence, 359 residues long: tRNA N6-adenosine threonylcarbamoyltransferase (359 aa).

Fe cation is bound by residues histidine 115 and histidine 119. Substrate contacts are provided by residues 137-141 (LVSGG), aspartate 170, glycine 183, and asparagine 283. A Fe cation-binding site is contributed by aspartate 311. Positions 328–359 (APDSLDIAPRSRWPLDEKSAPVFGTGRRGAKA) are disordered.

This sequence belongs to the KAE1 / TsaD family. Fe(2+) is required as a cofactor.

It localises to the cytoplasm. The catalysed reaction is L-threonylcarbamoyladenylate + adenosine(37) in tRNA = N(6)-L-threonylcarbamoyladenosine(37) in tRNA + AMP + H(+). Required for the formation of a threonylcarbamoyl group on adenosine at position 37 (t(6)A37) in tRNAs that read codons beginning with adenine. Is involved in the transfer of the threonylcarbamoyl moiety of threonylcarbamoyl-AMP (TC-AMP) to the N6 group of A37, together with TsaE and TsaB. TsaD likely plays a direct catalytic role in this reaction. The protein is tRNA N6-adenosine threonylcarbamoyltransferase of Brucella abortus (strain S19).